A 304-amino-acid chain; its full sequence is Glycine--tRNA ligase alpha subunit (304 aa).

The protein belongs to the class-II aminoacyl-tRNA synthetase family. Tetramer of two alpha and two beta subunits.

The protein localises to the cytoplasm. The catalysed reaction is tRNA(Gly) + glycine + ATP = glycyl-tRNA(Gly) + AMP + diphosphate. The polypeptide is Glycine--tRNA ligase alpha subunit (Pectobacterium atrosepticum (strain SCRI 1043 / ATCC BAA-672) (Erwinia carotovora subsp. atroseptica)).